A 465-amino-acid polypeptide reads, in one-letter code: Histidine--tRNA ligase (465 aa).

This sequence belongs to the class-II aminoacyl-tRNA synthetase family. Homodimer.

Its subcellular location is the cytoplasm. It catalyses the reaction tRNA(His) + L-histidine + ATP = L-histidyl-tRNA(His) + AMP + diphosphate + H(+). The sequence is that of Histidine--tRNA ligase (hisS) from Pelagibacter ubique (strain HTCC1062).